A 100-amino-acid chain; its full sequence is Integration host factor subunit alpha (100 aa).

This sequence belongs to the bacterial histone-like protein family. As to quaternary structure, heterodimer of an alpha and a beta chain.

This protein is one of the two subunits of integration host factor, a specific DNA-binding protein that functions in genetic recombination as well as in transcriptional and translational control. The polypeptide is Integration host factor subunit alpha (Jannaschia sp. (strain CCS1)).